We begin with the raw amino-acid sequence, 360 residues long: Photosystem II protein D1 (360 aa).

3 helical membrane passes run 29–46 (YIGWFGCLMFPTLLSAIS), 118–133 (HFFIGVCAYIGREWEL), and 142–156 (WICVAFSAPVAAAAA). His118 is a chlorophyll a binding site. Tyr126 serves as a coordination point for pheophytin a. Positions 170 and 189 each coordinate [CaMn4O5] cluster. Residues 197–218 (FHMLGVAGVFGGSLFSAMHGSL) form a helical membrane-spanning segment. His198 lines the chlorophyll a pocket. Residues His215 and 264–265 (SF) each bind a quinone. His215 contributes to the Fe cation binding site. His272 is a Fe cation binding site. The helical transmembrane segment at 274 to 288 (FLGAWPVVGIWFTAM) threads the bilayer. 4 residues coordinate [CaMn4O5] cluster: His332, Glu333, Asp342, and Ala344. Positions 345-360 (AGESLPVALVAPAVAA) are excised as a propeptide.

This sequence belongs to the reaction center PufL/M/PsbA/D family. In terms of assembly, PSII is composed of 1 copy each of membrane proteins PsbA, PsbB, PsbC, PsbD, PsbE, PsbF, PsbH, PsbI, PsbJ, PsbK, PsbL, PsbM, PsbT, PsbX, PsbY, PsbZ, Psb30/Ycf12, at least 3 peripheral proteins of the oxygen-evolving complex and a large number of cofactors. It forms dimeric complexes. The D1/D2 heterodimer binds P680, chlorophylls that are the primary electron donor of PSII, and subsequent electron acceptors. It shares a non-heme iron and each subunit binds pheophytin, quinone, additional chlorophylls, carotenoids and lipids. D1 provides most of the ligands for the Mn4-Ca-O5 cluster of the oxygen-evolving complex (OEC). There is also a Cl(-1) ion associated with D1 and D2, which is required for oxygen evolution. The PSII complex binds additional chlorophylls, carotenoids and specific lipids. serves as cofactor. In terms of processing, tyr-161 forms a radical intermediate that is referred to as redox-active TyrZ, YZ or Y-Z. Post-translationally, C-terminally processed by CTPA; processing is essential to allow assembly of the oxygen-evolving complex and thus photosynthetic growth.

Its subcellular location is the plastid. It is found in the chloroplast thylakoid membrane. It carries out the reaction 2 a plastoquinone + 4 hnu + 2 H2O = 2 a plastoquinol + O2. In terms of biological role, photosystem II (PSII) is a light-driven water:plastoquinone oxidoreductase that uses light energy to abstract electrons from H(2)O, generating O(2) and a proton gradient subsequently used for ATP formation. It consists of a core antenna complex that captures photons, and an electron transfer chain that converts photonic excitation into a charge separation. The D1/D2 (PsbA/PsbD) reaction center heterodimer binds P680, the primary electron donor of PSII as well as several subsequent electron acceptors. This is Photosystem II protein D1 from Emiliania huxleyi (Coccolithophore).